A 562-amino-acid polypeptide reads, in one-letter code: Abrin-c (562 aa).

The N-terminal stretch at 1–34 is a signal peptide; it reads MDKTLKLLILCLAWTCSFSALRCAARTYPPVATN. Gln-35 carries the post-translational modification Pyrrolidone carboxylic acid. Glu-198 is an active-site residue. A glycan (N-linked (GlcNAc...) asparagine) is linked at Asn-234. Cystine bridges form between Cys-281/Cys-303, Cys-320/Cys-339, and Cys-363/Cys-380. The Ricin B-type lectin 1 domain maps to 307-434; it reads YEPTVRIGGR…YLMRQGWRTG (128 aa). The 1-alpha repeat unit spans residues 317–359; the sequence is DGMCVDVYDDGYHNGNRIIAWKCKDRLEENQLWTLKSDKTIRS. The 1-beta repeat unit spans residues 360–400; that stretch reads NGKCLTTEGYAPGNYVMIYDCTSAVAEATYWEIWDNGTIIN. Asn-395 and Asn-435 each carry an N-linked (GlcNAc...) asparagine glycan. The stretch at 403 to 435 is one 1-gamma repeat; that stretch reads SALVLSAESSSMGGTLTVQTNEYLMRQGWRTGN. The Ricin B-type lectin 2 domain maps to 437-561; it reads TSPFVTSISG…GKPNQIWLTL (125 aa). Residues 448–483 form a 2-alpha repeat; the sequence is SDLCMQAQGSNVWLADCDNNKKEQQWALYTDGSIRS. Disulfide bonds link Cys-451-Cys-464 and Cys-490-Cys-507. One copy of the 2-beta repeat lies at 487 to 526; it reads TNNCLTSKDHKQGSPIVLMACSNGWASQRWLFKNDGSIYN. A 2-gamma repeat occupies 529 to 562; it reads DDMVMDVKRSDPSLKEIILHPYHGKPNQIWLTLF.

It in the N-terminal section; belongs to the ribosome-inactivating protein family. Type 2 RIP subfamily. As to quaternary structure, disulfide-linked dimer of A and B chains.

The catalysed reaction is Endohydrolysis of the N-glycosidic bond at one specific adenosine on the 28S rRNA.. The A chain is responsible for inhibiting protein synthesis through the catalytic inactivation of 60S ribosomal subunits by removing adenine from position 4,324 of 28S rRNA. Abrin-a is more toxic than ricin. Functionally, the B chain is a galactose-specific lectin that facilitates the binding of abrin to the cell membrane that precedes endocytosis. This chain is Abrin-c, found in Abrus precatorius (Indian licorice).